Here is a 188-residue protein sequence, read N- to C-terminus: MPVTPTSLADHLLVALPSLLDATFARSVALICQHDENGAMGVLVNQPSEYTLGEVLAQMDITTGDGDLQARMVLNGGPVHPERGFVIHDDARAWDSSLTVGDGLYLTTSRDILEAMARGEGPANAVVTLGCAGWGAGQLESELSENSWLTVPADAELVFQLPLEQRWQGAASRIGVDLFRLTDYSGHV.

This sequence belongs to the UPF0301 (AlgH) family.

The polypeptide is UPF0301 protein Smlt1098 (Stenotrophomonas maltophilia (strain K279a)).